The following is a 314-amino-acid chain: Ketimine reductase mu-crystallin (314 aa).

Arg47 provides a ligand contact to 3,3',5-triiodo-L-thyronine. NADPH is bound by residues Asp82, His92, Arg119, Ala144, Val146, Gln147, Asn168, Arg169, Thr170, Asn173, Thr205, Leu206, Val226, and Ala228. Position 257 (Glu257) interacts with 3,3',5-triiodo-L-thyronine. Ser292 lines the NADPH pocket.

Belongs to the ornithine cyclodeaminase/mu-crystallin family. In terms of assembly, homodimer. Binds the thyroid hormone triiodothyronine (T3); T3 binding inhibits enzymatic activity. As to expression, expressed in neural tissues, muscle and kidney. Expressed in the inner ear.

It localises to the cytoplasm. The catalysed reaction is L-pipecolate + NADP(+) = Delta(1)-piperideine-2-carboxylate + NADPH + H(+). It carries out the reaction L-pipecolate + NAD(+) = Delta(1)-piperideine-2-carboxylate + NADH + H(+). The enzyme catalyses L-proline + NADP(+) = 1-pyrroline-2-carboxylate + NADPH + H(+). It catalyses the reaction L-proline + NAD(+) = 1-pyrroline-2-carboxylate + NADH + H(+). The catalysed reaction is (3R)-1,4-thiomorpholine-3-carboxylate + NAD(+) = 3,4-dehydrothiomorpholine-3-carboxylate + NADH + 2 H(+). It carries out the reaction (3R)-1,4-thiomorpholine-3-carboxylate + NADP(+) = 3,4-dehydrothiomorpholine-3-carboxylate + NADPH + 2 H(+). The enzyme catalyses (S)-cystathionine ketimine + NADH + 2 H(+) = (3R,5S)-2,3,5,6,7-pentahydro-1,4-thiazepine-3,5-dicarboxylate + NAD(+). It catalyses the reaction (S)-cystathionine ketimine + NADPH + 2 H(+) = (3R,5S)-2,3,5,6,7-pentahydro-1,4-thiazepine-3,5-dicarboxylate + NADP(+). The catalysed reaction is (R)-lanthionine ketimine + NADPH + 2 H(+) = (3R,5R)-1,4-thiomorpholine-3,5-dicarboxylate + NADP(+). It carries out the reaction Delta(2)-thiazoline-2-carboxylate + NADPH + 2 H(+) = L-thiazolidine-2-carboxylate + NADP(+). With respect to regulation, inhibited by thyroid hormones triiodothyronine (T3) and thyroxine (T4). In terms of biological role, catalyzes the NAD(P)H-dependent reduction of imine double bonds of a number of cyclic ketimine substrates, including sulfur-containing cyclic ketimines. Under physiological conditions, it efficiently catalyzes delta(1)-piperideine-2-carboxylate (P2C) and delta(1)-pyrroline-2-carboxylate (Pyr2C) reduction, suggesting a central role in lysine and glutamate metabolism. Additional substrates are delta(2)-thiazoline-2-carboxylate (T2C), 3,4-dehydrothiomorpholine-3-carboxylate (AECK), and (R)-lanthionine ketimine (LK) that is reduced at very low rate compared to other substrates. Also catalyzes the NAD(P)H-dependent reduction of (S)-cystathionine ketimine (CysK). The chain is Ketimine reductase mu-crystallin from Homo sapiens (Human).